The primary structure comprises 297 residues: UDP-N-acetylenolpyruvoylglucosamine reductase (297 aa).

Residues 22–195 (RAGGTARYYA…LAGRFRLQRG (174 aa)) enclose the FAD-binding PCMH-type domain. The active site involves Arg-169. Ser-223 acts as the Proton donor in catalysis. Residue Glu-293 is part of the active site.

Belongs to the MurB family. FAD serves as cofactor.

Its subcellular location is the cytoplasm. It catalyses the reaction UDP-N-acetyl-alpha-D-muramate + NADP(+) = UDP-N-acetyl-3-O-(1-carboxyvinyl)-alpha-D-glucosamine + NADPH + H(+). It participates in cell wall biogenesis; peptidoglycan biosynthesis. Cell wall formation. This is UDP-N-acetylenolpyruvoylglucosamine reductase from Chloroflexus aurantiacus (strain ATCC 29364 / DSM 637 / Y-400-fl).